The following is a 570-amino-acid chain: Ribosome-inactivating protein SNAIf (570 aa).

Positions 1 to 28 (MRVVTKLLYLVVLAICGLGIHGALTHTR) are cleaved as a signal peptide. Asn40, Asn62, and Asn140 each carry an N-linked (GlcNAc...) asparagine glycan. The active site involves Glu199. Asn232 carries N-linked (GlcNAc...) asparagine glycosylation. Disulfide bonds link Cys284–Cys316, Cys332–Cys351, and Cys373–Cys385. Ricin B-type lectin domains lie at 319-439 (VEVT…WTVG) and 441-566 (VEPL…WITT). A 1-alpha repeat occupies 329–369 (DGLCVDVRDGHYIDGNTVQLGPCGNECNQLWTFRTDGTIRW). The 1-beta repeat unit spans residues 370–405 (LGKCLTTSSSVMIYDCNTVPPEATKWVVSTDGTITN). The stretch at 408 to 440 (SGLVLTAPQAAEGTALSLENNIHAARQGWTVGD) is one 1-gamma repeat. The stretch at 452-489 (KQMCLTENGENNFVWLEDCVLNRVEQEWALYGDGTIRV) is one 2-alpha repeat. Cys455 and Cys470 are joined by a disulfide. An N-linked (GlcNAc...) asparagine glycan is attached at Asn492. One copy of the 2-beta repeat lies at 493–531 (RSLCVTSEDHEPSDLIVILKCEGSGNQRWVFNTNGTISN). Cys496 and Cys513 are joined by a disulfide. N-linked (GlcNAc...) asparagine glycosylation is found at Asn526 and Asn544. Residues 534–567 (AKLVMDVAQSNVSLRKIILYPPTGNPNQQWITTT) form a 2-gamma repeat.

It belongs to the ribosome-inactivating protein family. Type 2 RIP subfamily. As to quaternary structure, tetramer of four pairs of disulfide bound A-B chains. Post-translationally, the precursor is processed in two chains, A and B, that are linked by a disulfide bond. A small truncated form corresponding roughly to the second ricin B-type lectin domain of the B chain, TrSNAIf, can also be produced. In terms of processing, N-glycosylated. In terms of tissue distribution, expressed in fruits.

It catalyses the reaction Endohydrolysis of the N-glycosidic bond at one specific adenosine on the 28S rRNA.. Its function is as follows. Neu5Ac(alpha2-6)Gal/GalNAc specific agglutinin. Behaves as a type-2 ribosome-inactivating protein. Strongly inhibits mammalian but not plant ribosomes. The A chain is responsible for inhibiting protein synthesis through the catalytic inactivation of 60S ribosomal subunits by removing adenine from position 4,324 of 28S rRNA. The B chain binds to cell receptors and probably facilitates the entry into the cell of the A chain; B chains are also responsible for cell agglutination (lectin activity). Involved in plant defense against insects. In terms of biological role, binds Neu5Ac(alpha2-6)Gal/GalNAc but has no clear agglutination activity. The protein is Ribosome-inactivating protein SNAIf of Sambucus nigra (European elder).